A 471-amino-acid chain; its full sequence is Argininosuccinate lyase (471 aa).

It belongs to the lyase 1 family. Argininosuccinate lyase subfamily.

The protein resides in the cytoplasm. It catalyses the reaction 2-(N(omega)-L-arginino)succinate = fumarate + L-arginine. It participates in amino-acid biosynthesis; L-arginine biosynthesis; L-arginine from L-ornithine and carbamoyl phosphate: step 3/3. The chain is Argininosuccinate lyase from Acidiphilium cryptum (strain JF-5).